Here is a 134-residue protein sequence, read N- to C-terminus: Profilin-2 (134 aa).

Cys-13 and Cys-118 form a disulfide bridge. The Involved in PIP2 interaction motif lies at 84–100 (AVIRGKKGSGGITIKET). Thr-114 bears the Phosphothreonine mark.

This sequence belongs to the profilin family. Occurs in many kinds of cells as a complex with monomeric actin in a 1:1 ratio. Post-translationally, phosphorylated by MAP kinases.

It localises to the cytoplasm. The protein resides in the cytoskeleton. Its function is as follows. Binds to actin and affects the structure of the cytoskeleton. At high concentrations, profilin prevents the polymerization of actin, whereas it enhances it at low concentrations. The protein is Profilin-2 of Olea europaea (Common olive).